The sequence spans 244 residues: MKKRFIYHDEKSNKFWWIDYEGDSLAVNYGKVGSIGKFQTKEFDNEEQCLKEASKLIAAKMKKGYQEDPKFNFMDRYYFDDEEIGLHVKTSHPNFQCHFTDPLYMCCWDEESPFGSDEGADALNVLENSLRKEPDLDCADFPQMLIETMWGMKYIAMDSILEEDVRAQLLVDEMSTIQSNMITYATAFGQIKVMGKISHKLKKMGLNALARHQLTAKILQWGDGQDSPILQKMIDDLTAFPHEN.

Residues 1 to 78 (MKKRFIYHDE…PKFNFMDRYY (78 aa)) enclose the WGR domain.

This is an uncharacterized protein from Escherichia coli (strain K12).